The sequence spans 202 residues: Protein DCV1 (202 aa).

The N-terminal stretch at Met1–Ser18 is a signal peptide. 3 consecutive transmembrane segments (helical) span residues Ile91 to Ile107, Ile137 to Met155, and Leu168 to Phe189.

The protein localises to the membrane. The polypeptide is Protein DCV1 (DCV1) (Saccharomyces cerevisiae (strain ATCC 204508 / S288c) (Baker's yeast)).